Consider the following 447-residue polypeptide: Glutamate--tRNA ligase 1 (447 aa).

The short motif at 10-20 (PSPTGMLHVGN) is the 'HIGH' region element. Residues 240 to 244 (KISKR) carry the 'KMSKS' region motif. An ATP-binding site is contributed by Lys243.

It belongs to the class-I aminoacyl-tRNA synthetase family. Glutamate--tRNA ligase type 1 subfamily. As to quaternary structure, monomer.

The protein resides in the cytoplasm. The enzyme catalyses tRNA(Glu) + L-glutamate + ATP = L-glutamyl-tRNA(Glu) + AMP + diphosphate. Functionally, catalyzes the attachment of glutamate to tRNA(Glu) in a two-step reaction: glutamate is first activated by ATP to form Glu-AMP and then transferred to the acceptor end of tRNA(Glu). This Rickettsia massiliae (strain Mtu5) protein is Glutamate--tRNA ligase 1.